The primary structure comprises 419 residues: F-box/FBD/LRR-repeat protein At4g26340 (419 aa).

One can recognise an F-box domain in the interval 1–53 (MDRISQLSDDLLLQILSFIPGKDVVATSLLSKRWQSLWMLVSELEYDDSYHTG). 7 LRR repeats span residues 55-81 (YKSF…HLNL), 132-159 (TLRL…HLKT), 160-185 (VDYE…FVER), 187-208 (DQDL…SMID), 226-253 (YLNI…HVDI), 254-284 (TQGV…MCPS), and 299-324 (VVKG…KLID). The 51-residue stretch at 339-389 (GWKLPSSVPECLLFSLEAFEWIGYKGRRGDREVATYVLKNAACLRTAKFSP) folds into the FBD domain.

This chain is F-box/FBD/LRR-repeat protein At4g26340, found in Arabidopsis thaliana (Mouse-ear cress).